The sequence spans 524 residues: MSDNGELEDKPPAPPVRMSSTIFSTGGKDPLSANHSLKPLPSVPEEKKPRHKIISIFSGTEKGSKKKEKERPEISPPSDFEHTIHVGFDAVTGEFTGMPEQWARLLQTSNITKLEQKKNPQAVLDVLKFYDSNTVKQKYLSFTPPEKDGFPSGTPALNAKGTEAPAVVTEEEDDDEETAPPVIAPRPDHTKSIYTRSVIDPVPAPVGDSHVDGAAKSLDKQKKKTKMTDEEIMEKLRTIVSIGDPKKKYTRYEKIGQGASGTVFTATDVALGQEVAIKQINLQKQPKKELIINEILVMKELKNPNIVNFLDSYLVGDELFVVMEYLAGGSLTDVVTETCMDEAQIAAVCRECLQALEFLHANQVIHRDIKSDNVLLGMEGSVKLTDFGFCAQITPEQSKRSTMVGTPYWMAPEVVTRKAYGPKVDIWSLGIMAIEMVEGEPPYLNENPLRALYLIATNGTPELQNPEKLSPIFRDFLNRCLEMDVEKRGSAKELLQHPFLKLAKPLSSLTPLIMAAKEAMKSNR.

Residues 1-81 are disordered; the sequence is MSDNGELEDK…PEISPPSDFE (81 aa). At S2 the chain carries N-acetylserine. A phosphoserine mark is found at S2, S20, S55, and S58. T60 is subject to Phosphothreonine. An N6-acetyllysine modification is found at K62. S64 bears the Phosphoserine mark. A compositionally biased stretch (basic and acidic residues) spans 67–81; sequence KEKERPEISPPSDFE. Residues 69 to 112 form a GTPase-binding region; the sequence is KERPEISPPSDFEHTIHVGFDAVTGEFTGMPEQWARLLQTSNIT. The interval 69–137 is autoregulatory region; sequence KERPEISPPS…KFYDSNTVKQ (69 aa). Positions 74-87 constitute a CRIB domain; that stretch reads ISPPSDFEHTIHVG. The residue at position 128 (K128) is an N6-acetyllysine. T134 carries the phosphothreonine modification. Y139 carries the post-translational modification Phosphotyrosine. S141 is modified (phosphoserine). A Phosphothreonine modification is found at T143. 2 disordered regions span residues 143-164 and 169-188; these read TPPE…GTEA and TEEE…PRPD. The residue at position 152 (S152) is a Phosphoserine. Phosphothreonine is present on residues T154 and T169. Positions 169–178 are enriched in acidic residues; sequence TEEEDDDEET. S197 carries the post-translational modification Phosphoserine. G213 is lipidated: N-myristoyl glycine; in form PAK-2p34. The short motif at 245–251 is the Nuclear localization signal element; that stretch reads PKKKYTR. A Protein kinase domain is found at 249 to 499; the sequence is YTRYEKIGQG…SAKELLQHPF (251 aa). Residues 255-263 and K278 each bind ATP; that span reads IGQGASGTV. R367 (proton acceptor) is an active-site residue. A Phosphothreonine; by autocatalysis modification is found at T402.

It belongs to the protein kinase superfamily. STE Ser/Thr protein kinase family. STE20 subfamily. In terms of assembly, interacts tightly with GTP-bound but not GDP-bound CDC42/p21 and RAC1. Interacts with SH3MD4. Interacts with SCRIB. Interacts with ARHGEF7 and GIT1. PAK-2p34 interacts with ARHGAP10. (Microbial infection) Interacts with and activated by HIV-1 Nef. Post-translationally, full-length PAK2 is autophosphorylated when activated by CDC42/p21. Following cleavage, both peptides, PAK-2p27 and PAK-2p34, become highly autophosphorylated, with PAK-2p27 being phosphorylated on serine and PAK-2p34 on threonine residues, respectively. Autophosphorylation of PAK-2p27 can occur in the absence of any effectors and is dependent on phosphorylation of Thr-402, because PAK-2p27 is acting as an exogenous substrate. During apoptosis proteolytically cleaved by caspase-3 or caspase-3-like proteases to yield active PAK-2p34. In terms of processing, ubiquitinated, leading to its proteasomal degradation. Post-translationally, PAK-2p34 is myristoylated. In terms of tissue distribution, ubiquitously expressed. Higher levels seen in skeletal muscle, ovary, thymus and spleen.

Its subcellular location is the cytoplasm. The protein localises to the nucleus. The protein resides in the perinuclear region. It localises to the membrane. The enzyme catalyses L-seryl-[protein] + ATP = O-phospho-L-seryl-[protein] + ADP + H(+). It catalyses the reaction L-threonyl-[protein] + ATP = O-phospho-L-threonyl-[protein] + ADP + H(+). Activated by binding small G proteins. Binding of GTP-bound CDC42 or RAC1 to the autoregulatory region releases monomers from the autoinhibited dimer, enables phosphorylation of Thr-402 and allows the kinase domain to adopt an active structure. Following caspase cleavage, autophosphorylated PAK-2p34 is constitutively active. In terms of biological role, serine/threonine protein kinase that plays a role in a variety of different signaling pathways including cytoskeleton regulation, cell motility, cell cycle progression, apoptosis or proliferation. Acts as a downstream effector of the small GTPases CDC42 and RAC1. Activation by the binding of active CDC42 and RAC1 results in a conformational change and a subsequent autophosphorylation on several serine and/or threonine residues. Full-length PAK2 stimulates cell survival and cell growth. Phosphorylates MAPK4 and MAPK6 and activates the downstream target MAPKAPK5, a regulator of F-actin polymerization and cell migration. Phosphorylates JUN and plays an important role in EGF-induced cell proliferation. Phosphorylates many other substrates including histone H4 to promote assembly of H3.3 and H4 into nucleosomes, BAD, ribosomal protein S6, or MBP. Phosphorylates CASP7, thereby preventing its activity. Additionally, associates with ARHGEF7 and GIT1 to perform kinase-independent functions such as spindle orientation control during mitosis. On the other hand, apoptotic stimuli such as DNA damage lead to caspase-mediated cleavage of PAK2, generating PAK-2p34, an active p34 fragment that translocates to the nucleus and promotes cellular apoptosis involving the JNK signaling pathway. Caspase-activated PAK2 phosphorylates MKNK1 and reduces cellular translation. The sequence is that of Serine/threonine-protein kinase PAK 2 (PAK2) from Homo sapiens (Human).